Here is a 174-residue protein sequence, read N- to C-terminus: MAAVVLGGDTMGPERIFPNQTEDLGPHQGPTEGTGDWSSEEPEEEQEETGAGPAGYSYQPLNQDPEQEEVELAPVGEGEDGAADIQDRIQALGLHLPDPPLESEDEDEEGAAALSSHSSIPMDPEHVELVKRTMAGVSLPAPGVPAWAREISDAQWEDVVQKALQARQASPAWK.

Disordered stretches follow at residues 1–83 (MAAV…DGAA) and 95–123 (HLPD…IPMD). 3 stretches are compositionally biased toward acidic residues: residues 38–48 (SSEEPEEEQEE), 65–82 (PEQE…EDGA), and 101–110 (LESEDEDEEG). Ser-103 is modified (phosphoserine).

In terms of tissue distribution, highly expressed in testis. Transcripts can be found in primary and secondary spermatocytes, and spermatids, but the protein itself is only detected in spermatids. No expression in Leydig cells, spermatogonia, or sperm. Very weak expression in the heart, kidney, spleen, thymus and ovary.

May play an important role in spermatogenesis and/or testis development. The protein is Male-enhanced antigen 1 (Mea1) of Mus musculus (Mouse).